Reading from the N-terminus, the 229-residue chain is Orotidine 5'-phosphate decarboxylase (229 aa).

Substrate-binding positions include aspartate 10, lysine 32, aspartate 59 to threonine 68, threonine 119, arginine 180, glutamine 189, glycine 209, and arginine 210. Lysine 61 functions as the Proton donor in the catalytic mechanism.

It belongs to the OMP decarboxylase family. Type 1 subfamily. Homodimer.

The catalysed reaction is orotidine 5'-phosphate + H(+) = UMP + CO2. Its pathway is pyrimidine metabolism; UMP biosynthesis via de novo pathway; UMP from orotate: step 2/2. Its function is as follows. Catalyzes the decarboxylation of orotidine 5'-monophosphate (OMP) to uridine 5'-monophosphate (UMP). The polypeptide is Orotidine 5'-phosphate decarboxylase (Legionella pneumophila (strain Corby)).